The sequence spans 222 residues: UPF0488 protein C8orf33 homolog (222 aa).

The segment covering 1-16 (MAEPGRPAREAPAASS) has biased composition (low complexity). Disordered stretches follow at residues 1–103 (MAEP…AEQL), 119–146 (KTQRPTPKQKEQAVGAIRTLRSEKTPLP), and 186–210 (VSEATRKKSGRVCRPRPAERAKTTP). At Ala2 the chain carries N-acetylalanine. Residues 17 to 28 (RKTHRAPRRPRP) show a composition bias toward basic residues. Arg27 is modified (omega-N-methylarginine). Residues 29–39 (SRSASGASEPP) are compositionally biased toward low complexity. Position 75 is a phosphoserine (Ser75). Residues 93–103 (PPSAEAQAEQL) are compositionally biased toward low complexity.

Belongs to the UPF0488 family.

The sequence is that of UPF0488 protein C8orf33 homolog from Mus musculus (Mouse).